We begin with the raw amino-acid sequence, 166 residues long: KH homology domain-containing protein 1C (166 aa).

Residues 19–78 (PLVFDMEEDKEDYIFGPHDEYLHTLEVHSNTLIQLERWFTPTGQTRVTVVGPLKARLWVM) enclose the KH; atypical domain.

Belongs to the KHDC1 family.

In Mus musculus (Mouse), this protein is KH homology domain-containing protein 1C (Khdc1c).